The sequence spans 613 residues: TANK-binding kinase 1-binding protein 1 (613 aa).

The segment at 1–280 (MESMFEDDIS…QDLASNQSEC (280 aa)) is homodimerization. Residues 48 to 162 (YGDIKERLGG…ALVETHLRQI (115 aa)) adopt a coiled-coil conformation. Residue Ser184 is modified to Phosphoserine. Residues 218–277 (TSVSVSELERRRLEEALEAAQGEARGAQLREEQLQAECERLQGELKQLQETRAQDLASNQ) adopt a coiled-coil conformation. Residues 281 to 330 (GMAWVKRVGDDQVNLALAYTELTEELGRLRELSSLQGRILRTLLQEQARN) are interaction with TBK1 and IKBKE. The disordered stretch occupies residues 328–457 (ARNAGQRHSP…HHAKAGFQGR (130 aa)). A compositionally biased stretch (pro residues) spans 346 to 361 (PACPSPSPPARPPPCA). A compositionally biased stretch (low complexity) spans 362–372 (PCQSPAAQRRS). A phosphoserine mark is found at Ser365, Ser372, Ser379, Ser385, Ser400, and Ser415. Pro residues predominate over residues 389–406 (PSCPSPVPQRRSPVPPSC). A compositionally biased stretch (pro residues) spans 416–433 (PVPPSCPAPQPRPPPPPG). Phosphoserine is present on residues Ser502 and Ser532. The UBZ1-type zinc finger occupies 581-607 (IRSCPLCQLGFPVGYPDDALIKHIDSH). 4 residues coordinate Zn(2+): Cys584, Cys587, His603, and His607.

In terms of assembly, homodimer. May form a heterodimer with NAP1. Interacts with TKB1 and IKBKE. Weakly interacts with DDX3X.

In terms of biological role, adapter protein which constitutively binds TBK1 and IKBKE playing a role in antiviral innate immunity. Essential for the efficient induction of IRF-dependent transcription following infection with Sendai virus. The chain is TANK-binding kinase 1-binding protein 1 from Rattus norvegicus (Rat).